The chain runs to 196 residues: Probable malonic semialdehyde reductase RutE (196 aa).

This sequence belongs to the nitroreductase family. HadB/RutE subfamily. The cofactor is FMN.

The enzyme catalyses 3-hydroxypropanoate + NADP(+) = 3-oxopropanoate + NADPH + H(+). May reduce toxic product malonic semialdehyde to 3-hydroxypropionic acid, which is excreted. This is Probable malonic semialdehyde reductase RutE from Escherichia coli O7:K1 (strain IAI39 / ExPEC).